The primary structure comprises 71 residues: Defensin-like protein 124 (71 aa).

Residues Met-1–Gly-25 form the signal peptide. 4 disulfides stabilise this stretch: Cys-28-Cys-71, Cys-40-Cys-60, Cys-45-Cys-65, and Cys-49-Cys-67.

This sequence belongs to the DEFL family.

It is found in the secreted. The chain is Defensin-like protein 124 (LCR16) from Arabidopsis thaliana (Mouse-ear cress).